Consider the following 334-residue polypeptide: Adenosine deaminase (334 aa).

Zn(2+)-binding residues include His-12 and His-14. Positions 14, 16, and 170 each coordinate substrate. His-197 is a Zn(2+) binding site. The Proton donor role is filled by Glu-200. Asp-278 contacts Zn(2+). Residue Asp-279 coordinates substrate.

The protein belongs to the metallo-dependent hydrolases superfamily. Adenosine and AMP deaminases family. Adenosine deaminase subfamily. Zn(2+) serves as cofactor.

It carries out the reaction adenosine + H2O + H(+) = inosine + NH4(+). It catalyses the reaction 2'-deoxyadenosine + H2O + H(+) = 2'-deoxyinosine + NH4(+). In terms of biological role, catalyzes the hydrolytic deamination of adenosine and 2-deoxyadenosine. In Vibrio parahaemolyticus serotype O3:K6 (strain RIMD 2210633), this protein is Adenosine deaminase.